The chain runs to 249 residues: 2,3-bisphosphoglycerate-dependent phosphoglycerate mutase (249 aa).

Residues 8–15 (RHGESVWN), 21–22 (TG), R60, 87–90 (ERHY), K98, 114–115 (RR), and 183–184 (GN) each bind substrate. The Tele-phosphohistidine intermediate role is filled by H9. The Proton donor/acceptor role is filled by E87.

It belongs to the phosphoglycerate mutase family. BPG-dependent PGAM subfamily.

It carries out the reaction (2R)-2-phosphoglycerate = (2R)-3-phosphoglycerate. It functions in the pathway carbohydrate degradation; glycolysis; pyruvate from D-glyceraldehyde 3-phosphate: step 3/5. Its function is as follows. Catalyzes the interconversion of 2-phosphoglycerate and 3-phosphoglycerate. The sequence is that of 2,3-bisphosphoglycerate-dependent phosphoglycerate mutase from Chloroherpeton thalassium (strain ATCC 35110 / GB-78).